The primary structure comprises 211 residues: Protein-L-isoaspartate O-methyltransferase (211 aa).

The active site involves serine 62.

It belongs to the methyltransferase superfamily. L-isoaspartyl/D-aspartyl protein methyltransferase family.

The protein localises to the cytoplasm. It carries out the reaction [protein]-L-isoaspartate + S-adenosyl-L-methionine = [protein]-L-isoaspartate alpha-methyl ester + S-adenosyl-L-homocysteine. In terms of biological role, catalyzes the methyl esterification of L-isoaspartyl residues in peptides and proteins that result from spontaneous decomposition of normal L-aspartyl and L-asparaginyl residues. It plays a role in the repair and/or degradation of damaged proteins. This is Protein-L-isoaspartate O-methyltransferase from Shewanella oneidensis (strain ATCC 700550 / JCM 31522 / CIP 106686 / LMG 19005 / NCIMB 14063 / MR-1).